The following is a 427-amino-acid chain: Serine--tRNA ligase (427 aa).

231–233 (TAE) provides a ligand contact to L-serine. 262 to 264 (RSE) contacts ATP. Glu-285 is an L-serine binding site. Position 349 to 352 (349 to 352 (EISS)) interacts with ATP. Ser-385 contributes to the L-serine binding site.

Belongs to the class-II aminoacyl-tRNA synthetase family. Type-1 seryl-tRNA synthetase subfamily. As to quaternary structure, homodimer. The tRNA molecule binds across the dimer.

The protein localises to the cytoplasm. It carries out the reaction tRNA(Ser) + L-serine + ATP = L-seryl-tRNA(Ser) + AMP + diphosphate + H(+). It catalyses the reaction tRNA(Sec) + L-serine + ATP = L-seryl-tRNA(Sec) + AMP + diphosphate + H(+). The protein operates within aminoacyl-tRNA biosynthesis; selenocysteinyl-tRNA(Sec) biosynthesis; L-seryl-tRNA(Sec) from L-serine and tRNA(Sec): step 1/1. Its function is as follows. Catalyzes the attachment of serine to tRNA(Ser). Is also able to aminoacylate tRNA(Sec) with serine, to form the misacylated tRNA L-seryl-tRNA(Sec), which will be further converted into selenocysteinyl-tRNA(Sec). The protein is Serine--tRNA ligase of Methylococcus capsulatus (strain ATCC 33009 / NCIMB 11132 / Bath).